The chain runs to 801 residues: Elongation factor G, mitochondrial (801 aa).

A mitochondrion-targeting transit peptide spans 1–24 (MRCPSLARLPHRAISGLTRLPVRL). In terms of domain architecture, tr-type G spans 99-386 (SRIRNIGIAA…GVIDYLPNPS (288 aa)). GTP is bound by residues 108–115 (AHIDSGKT), 184–188 (DTPGH), and 238–241 (NKMD).

Belongs to the TRAFAC class translation factor GTPase superfamily. Classic translation factor GTPase family. EF-G/EF-2 subfamily.

The protein localises to the mitochondrion. Its pathway is protein biosynthesis; polypeptide chain elongation. Its function is as follows. Mitochondrial GTPase that catalyzes the GTP-dependent ribosomal translocation step during translation elongation. During this step, the ribosome changes from the pre-translocational (PRE) to the post-translocational (POST) state as the newly formed A-site-bound peptidyl-tRNA and P-site-bound deacylated tRNA move to the P and E sites, respectively. Catalyzes the coordinated movement of the two tRNA molecules, the mRNA and conformational changes in the ribosome. The chain is Elongation factor G, mitochondrial (mef1) from Aspergillus clavatus (strain ATCC 1007 / CBS 513.65 / DSM 816 / NCTC 3887 / NRRL 1 / QM 1276 / 107).